An 879-amino-acid chain; its full sequence is Alanine--tRNA ligase (879 aa).

Positions 566, 570, 668, and 672 each coordinate Zn(2+).

It belongs to the class-II aminoacyl-tRNA synthetase family. Zn(2+) serves as cofactor.

The protein localises to the cytoplasm. It catalyses the reaction tRNA(Ala) + L-alanine + ATP = L-alanyl-tRNA(Ala) + AMP + diphosphate. Its function is as follows. Catalyzes the attachment of alanine to tRNA(Ala) in a two-step reaction: alanine is first activated by ATP to form Ala-AMP and then transferred to the acceptor end of tRNA(Ala). Also edits incorrectly charged Ser-tRNA(Ala) and Gly-tRNA(Ala) via its editing domain. This chain is Alanine--tRNA ligase, found in Listeria innocua serovar 6a (strain ATCC BAA-680 / CLIP 11262).